Consider the following 677-residue polypeptide: MSSVDQKAISTIRLLAVDAVAAANSGHPGAPLGLAPAAHAVFKKMRFNPKDTKWINRDRFVLSNGHACALLYSMLVLYGYDLTVEDLKKFRQLGSKTPGHPENTDVPGAEVTTGPLGQGICNGVGIALAQAQFAATYNKPDFPISDSYTYVFLGDGCLMEGVSSEASSLAGHLQLGNLIAFWDDNKISIDGSTEVAFTEDVIARYKSYGWHIVEVSDADTDITAIAAAIDEAKKVTNKPTLVRLTTTIGFGSLAQGTHGVHGAPLKADDIKQLKTKWGFNPEESFAVPAEVTASYNEHVAENQKIQQQWNELFAAYKQKYPELGAELQRRLDGKLPENWDKALPVYTPADAAVATRKLSEIVLSKIIPEVPEIIGGSADLTPSNLTKAKGTVDFQPAATGLGDYSGRYIRYGVREHAMGAIMNGIAAFGANYKNYGGTFLNFVSYAAGAVRLSALSEFPITWVATHDSIGLGEDGPTHQPIETLAHFRATPNISVWRPADGNETSAAYKSAIESTHTPHILALTRQNLPQLEGSSIEKASKGGYTLVQQDKADIIIVATGSEVSLAVDALKVLEGQGIKAGVVSLPDQLTFDKQSEEYKLSVLPDGVPILSVEVMSTFGWSKYSHQQFGLNRFGASGKAPEIFKLFEFTPEGVAERAAKTVAFYKGKDVVSPLRSAF.

Position 27 (H27) interacts with substrate. Thiamine diphosphate is bound by residues H66 and 114 to 116 (GPL). Residue D155 coordinates Mg(2+). Residues G156 and N185 each contribute to the thiamine diphosphate site. Mg(2+) is bound by residues N185 and I187. Substrate contacts are provided by H261, R356, and S383. H261 serves as a coordination point for thiamine diphosphate. Thiamine diphosphate is bound by residues E415 and F442. E415 acts as the Proton donor in catalysis. Residues H466, D474, and R525 each coordinate substrate.

This sequence belongs to the transketolase family. Homodimer. Mg(2+) is required as a cofactor. Ca(2+) serves as cofactor. Requires Mn(2+) as cofactor. It depends on Co(2+) as a cofactor. The cofactor is thiamine diphosphate.

It carries out the reaction D-sedoheptulose 7-phosphate + D-glyceraldehyde 3-phosphate = aldehydo-D-ribose 5-phosphate + D-xylulose 5-phosphate. In terms of biological role, catalyzes the transfer of a two-carbon ketol group from a ketose donor to an aldose acceptor, via a covalent intermediate with the cofactor thiamine pyrophosphate. The sequence is that of Transketolase (TKT) from Scheffersomyces stipitis (strain ATCC 58785 / CBS 6054 / NBRC 10063 / NRRL Y-11545) (Yeast).